We begin with the raw amino-acid sequence, 79 residues long: uncharacterized protein (79 aa).

A coiled-coil region spans residues 4 to 43 (QENEDLRKQLVEASELLKSQAKELKDAHQQQKLALQDFLE).

This is an uncharacterized protein from Homo sapiens (Human).